Reading from the N-terminus, the 231-residue chain is Histone H1 (231 aa).

The segment covering 1–17 (MSDPAIEVAPVPVASPA) has biased composition (low complexity). Disordered stretches follow at residues 1–44 (MSDP…PVSD) and 124–231 (TKKV…AKKA). Positions 38-112 (THPPVSDMIV…GASGSFKLPA (75 aa)) constitute an H15 domain. 3 stretches are compositionally biased toward basic residues: residues 145–171 (KVKKTIAKKPKVASATKIKKPVAKTTK), 178–213 (PTKKVAAKPKAAPKPKAAPKPKVAKPKKAAAPKAKK), and 221–231 (KAAKKPSAKKA).

Belongs to the histone H1/H5 family.

It localises to the nucleus. It is found in the chromosome. In terms of biological role, histones H1 are necessary for the condensation of nucleosome chains into higher-order structures. The chain is Histone H1 from Chironomus thummi thummi (Midge).